The primary structure comprises 127 residues: Small ribosomal subunit protein uS12 (127 aa).

The residue at position 89 (D89) is a 3-methylthioaspartic acid.

This sequence belongs to the universal ribosomal protein uS12 family. Part of the 30S ribosomal subunit. Contacts proteins S8 and S17. May interact with IF1 in the 30S initiation complex.

Its function is as follows. With S4 and S5 plays an important role in translational accuracy. Functionally, interacts with and stabilizes bases of the 16S rRNA that are involved in tRNA selection in the A site and with the mRNA backbone. Located at the interface of the 30S and 50S subunits, it traverses the body of the 30S subunit contacting proteins on the other side and probably holding the rRNA structure together. The combined cluster of proteins S8, S12 and S17 appears to hold together the shoulder and platform of the 30S subunit. The polypeptide is Small ribosomal subunit protein uS12 (Aliarcobacter butzleri (strain RM4018) (Arcobacter butzleri)).